The chain runs to 98 residues: Small ribosomal subunit protein uS19 (98 aa).

Residues 77 to 98 (TRTYRGHAGGKAEKGGSAPKRK) are disordered.

The protein belongs to the universal ribosomal protein uS19 family.

In terms of biological role, protein S19 forms a complex with S13 that binds strongly to the 16S ribosomal RNA. The protein is Small ribosomal subunit protein uS19 of Prosthecochloris aestuarii (strain DSM 271 / SK 413).